The chain runs to 301 residues: Homoserine O-acetyltransferase (301 aa).

The active-site Acyl-thioester intermediate is the cysteine 142. 2 residues coordinate substrate: lysine 163 and serine 192. Histidine 235 (proton acceptor) is an active-site residue. The active site involves glutamate 237. Residue arginine 249 coordinates substrate.

It belongs to the MetA family.

Its subcellular location is the cytoplasm. The enzyme catalyses L-homoserine + acetyl-CoA = O-acetyl-L-homoserine + CoA. It participates in amino-acid biosynthesis; L-methionine biosynthesis via de novo pathway; O-acetyl-L-homoserine from L-homoserine: step 1/1. Transfers an acetyl group from acetyl-CoA to L-homoserine, forming acetyl-L-homoserine. This Clostridium acetobutylicum (strain ATCC 824 / DSM 792 / JCM 1419 / IAM 19013 / LMG 5710 / NBRC 13948 / NRRL B-527 / VKM B-1787 / 2291 / W) protein is Homoserine O-acetyltransferase.